An 87-amino-acid polypeptide reads, in one-letter code: Kawaguchipeptin peptide (87 aa).

The propeptide occupies 1–33 (MKNPTLLPKLTAPVERPAVTSSDLKQASSVDAA). Residue W34 is the site of 3'-prenyl-2',N2-cyclotryptophan; partial attachment. The segment at residues 34–44 (WLNGDNNWSTP) is a cross-link (cyclopeptide (Trp-Pro)). The residue at position 35 (L35) is a D-leucine; partial. A lipid anchor (3'-prenyl-2',N2-cyclotryptophan; partial) is attached at W41. Residues 45-51 (FAGVNAA) constitute a propeptide that is removed on maturation. The 3'-prenyl-2',N2-cyclotryptophan; partial moiety is linked to residue W52. Residues 52-62 (WLNGDNNWSTP) constitute a cross-link (cyclopeptide (Trp-Pro)). Position 53 is a D-leucine; partial (L53). W59 is lipidated: 3'-prenyl-2',N2-cyclotryptophan; partial. A propeptide spanning residues 63–69 (FAGVNAA) is cleaved from the precursor. W70 carries the 3'-prenyl-2',N2-cyclotryptophan; partial lipid modification. A cross-link (cyclopeptide (Trp-Pro)) is located at residues 70–80 (WLNGDNNWSTP). L71 carries the post-translational modification D-leucine; partial. Residue W77 is the site of 3'-prenyl-2',N2-cyclotryptophan; partial attachment. A propeptide spanning residues 81-87 (FAADGAE) is cleaved from the precursor.

Kawaguchipeptin A contains a D-Leu and 2 prenylated Trp, whereas kawaguchipeptin B only contains unmodified amino acids. Post-translationally, kawaguchipeptin A is prenylated in vivo. Upon expression in E.coli of the whole operon, Trp residues are prenylated by C-prenyltransferase KgpF. Prenylation by KgpF is likely the last enzymatic step in the biosynthetic maturation of kawaguchipeptin A.

Both kawaguchipeptin A and B, which only differ by post-translational modifications, have antibacterial activities, since they inhibit the growth of the Gram-positive bacterium S.aureus at a concentration of 1 ug/mL. This Microcystis aeruginosa (strain NIES-88 / KW-MA1-3) protein is Kawaguchipeptin peptide.